The following is a 359-amino-acid chain: UDP-N-acetylglucosamine--N-acetylmuramyl-(pentapeptide) pyrophosphoryl-undecaprenol N-acetylglucosamine transferase (359 aa).

UDP-N-acetyl-alpha-D-glucosamine is bound by residues 12–14 (TGG), Asn-124, Arg-163, Ser-191, Ile-245, 264–269 (ALTVAE), and Gln-290.

It belongs to the glycosyltransferase 28 family. MurG subfamily.

It is found in the cell inner membrane. The enzyme catalyses di-trans,octa-cis-undecaprenyl diphospho-N-acetyl-alpha-D-muramoyl-L-alanyl-D-glutamyl-meso-2,6-diaminopimeloyl-D-alanyl-D-alanine + UDP-N-acetyl-alpha-D-glucosamine = di-trans,octa-cis-undecaprenyl diphospho-[N-acetyl-alpha-D-glucosaminyl-(1-&gt;4)]-N-acetyl-alpha-D-muramoyl-L-alanyl-D-glutamyl-meso-2,6-diaminopimeloyl-D-alanyl-D-alanine + UDP + H(+). Its pathway is cell wall biogenesis; peptidoglycan biosynthesis. Cell wall formation. Catalyzes the transfer of a GlcNAc subunit on undecaprenyl-pyrophosphoryl-MurNAc-pentapeptide (lipid intermediate I) to form undecaprenyl-pyrophosphoryl-MurNAc-(pentapeptide)GlcNAc (lipid intermediate II). The polypeptide is UDP-N-acetylglucosamine--N-acetylmuramyl-(pentapeptide) pyrophosphoryl-undecaprenol N-acetylglucosamine transferase (Nitrosococcus oceani (strain ATCC 19707 / BCRC 17464 / JCM 30415 / NCIMB 11848 / C-107)).